The chain runs to 164 residues: MDKLGVDLPLLISQIVNFCLLAFLLNTFLYKPVLNALQARSERIRESLDNAEKVKQQLARVDADYEAKLQEARREGQTIISQAQERARAQEAELLVVARNNAAKIEEEARGKVEQERQQVLRGLQGQLASLVTETASNVLGRELQTKGHDELINKSIDQLGRLN.

Residues Leu10 to Tyr30 traverse the membrane as a helical segment.

Belongs to the ATPase B chain family. In terms of assembly, F-type ATPases have 2 components, F(1) - the catalytic core - and F(0) - the membrane proton channel. F(1) has five subunits: alpha(3), beta(3), gamma(1), delta(1), epsilon(1). F(0) has three main subunits: a(1), b(2) and c(10-14). The alpha and beta chains form an alternating ring which encloses part of the gamma chain. F(1) is attached to F(0) by a central stalk formed by the gamma and epsilon chains, while a peripheral stalk is formed by the delta and b chains.

Its subcellular location is the cell membrane. Functionally, f(1)F(0) ATP synthase produces ATP from ADP in the presence of a proton or sodium gradient. F-type ATPases consist of two structural domains, F(1) containing the extramembraneous catalytic core and F(0) containing the membrane proton channel, linked together by a central stalk and a peripheral stalk. During catalysis, ATP synthesis in the catalytic domain of F(1) is coupled via a rotary mechanism of the central stalk subunits to proton translocation. Component of the F(0) channel, it forms part of the peripheral stalk, linking F(1) to F(0). The chain is ATP synthase subunit b from Herpetosiphon aurantiacus (strain ATCC 23779 / DSM 785 / 114-95).